The following is a 435-amino-acid chain: MAFIDKCKIVLIAGNGGDGIVSWRRETHVPEGGPAGGNGGNGGSIWFVGNHNETSLEFLKYKKIIRAKHGEKGDIKNQHGANAEDVFINVPLGTVVYDAITNEILADINIDQQKYLVAQGGLGGHGNTHFKSAFNKAPNLYELGELGENIEVVLELKTIADIGIIGLPNAGKSTLISSFTNAKPKTANYMFTTLNPVLGTIYRDQNRIIFADIPGLIEGAHTGVGLGHDFLKHIERCFLLIHLISLDPNDNSDIISAYETIVNELKQYKQSLVNKPIVLVANKIDQIGALENLQILKEHLKDNQYIKVISALTNLHVDAMLDDVIKIYFDQKKIYEQRLKEHLPVDQILKWASDTPKNKELDKTIKIVKVDDHFFEVFGEYLKYWVHRIPLKTQDNLIRFNQKLQSINFNQQLLQAGAIAGDSIKIYDITLEFEE.

The region spanning 1–159 (MAFIDKCKIV…IEVVLELKTI (159 aa)) is the Obg domain. Positions 160–329 (ADIGIIGLPN…MLDDVIKIYF (170 aa)) constitute an OBG-type G domain. GTP is bound by residues 166 to 173 (GLPNAGKS), 191 to 195 (FTTLN), 212 to 215 (DIPG), 282 to 285 (NKID), and 310 to 312 (SAL). Mg(2+)-binding residues include serine 173 and threonine 193. An OCT domain is found at 355-435 (TPKNKELDKT…IYDITLEFEE (81 aa)).

This sequence belongs to the TRAFAC class OBG-HflX-like GTPase superfamily. OBG GTPase family. As to quaternary structure, monomer. It depends on Mg(2+) as a cofactor.

It is found in the cytoplasm. Its function is as follows. An essential GTPase which binds GTP, GDP and possibly (p)ppGpp with moderate affinity, with high nucleotide exchange rates and a fairly low GTP hydrolysis rate. Plays a role in control of the cell cycle, stress response, ribosome biogenesis and in those bacteria that undergo differentiation, in morphogenesis control. In Ureaplasma urealyticum serovar 10 (strain ATCC 33699 / Western), this protein is GTPase Obg.